A 298-amino-acid chain; its full sequence is Ethanolamine ammonia-lyase small subunit (298 aa).

The adenosylcob(III)alamin site is built by valine 210, glutamate 231, and cysteine 261.

The protein belongs to the EutC family. As to quaternary structure, the basic unit is a heterodimer which dimerizes to form tetramers. The heterotetramers trimerize; 6 large subunits form a core ring with 6 small subunits projecting outwards. The cofactor is adenosylcob(III)alamin.

It is found in the bacterial microcompartment. It catalyses the reaction ethanolamine = acetaldehyde + NH4(+). The protein operates within amine and polyamine degradation; ethanolamine degradation. Functionally, catalyzes the deamination of various vicinal amino-alcohols to oxo compounds. Allows this organism to utilize ethanolamine as the sole source of nitrogen and carbon in the presence of external vitamin B12. In Salmonella schwarzengrund (strain CVM19633), this protein is Ethanolamine ammonia-lyase small subunit.